The chain runs to 731 residues: Alpha-catulin (731 aa).

Phosphoserine occurs at positions 373 and 537. The tract at residues 535 to 559 (HLSLPKPTKNSANLKSLKPDKPDSE) is disordered.

This sequence belongs to the vinculin/alpha-catenin family. As to quaternary structure, interacts with ARHGEF1. Interacts with Dtna. The interaction is required for correct localization of both Ctnnal1 and Dtna.

It is found in the cytoplasm. The protein resides in the cytoskeleton. Its subcellular location is the cell membrane. May modulate the Rho pathway signaling by providing a scaffold for the Lbc Rho guanine nucleotide exchange factor (ARHGEF1). The sequence is that of Alpha-catulin (Ctnnal1) from Mus musculus (Mouse).